The primary structure comprises 237 residues: MVIIWILLLSFISCGPQVSWAKRLEREPKYPCSRGGKLCDPRQRRDAGGRGGVYEHLGGAPRNRKLYCATKYHLQIHLNGKINGTLEKNSVFSILEITAVDVGIVAIKGLFSGRYLAMNQRGRLYASETYNPECEFVERIHELGYNTYASRLYRTVPSGAGTKRKASAERLWYVSINGKGRPRRGFKTRRTQKSSLFLPRVLDNKDHDAVRLFHTNAVYRESILKPSKPSGRQRRGQ.

The N-terminal stretch at 1-21 (MVIIWILLLSFISCGPQVSWA) is a signal peptide. The N-linked (GlcNAc...) asparagine glycan is linked to Asn83.

It belongs to the heparin-binding growth factors family.

Its function is as follows. Plays an important role in the regulation of embryonic development, cell proliferation, and cell differentiation. This Xenopus laevis (African clawed frog) protein is Fibroblast growth factor 3 (fgf3).